A 240-amino-acid polypeptide reads, in one-letter code: 1-(5-phosphoribosyl)-5-[(5-phosphoribosylamino)methylideneamino] imidazole-4-carboxamide isomerase (240 aa).

D8 acts as the Proton acceptor in catalysis. D129 serves as the catalytic Proton donor.

Belongs to the HisA/HisF family.

The protein resides in the cytoplasm. It carries out the reaction 1-(5-phospho-beta-D-ribosyl)-5-[(5-phospho-beta-D-ribosylamino)methylideneamino]imidazole-4-carboxamide = 5-[(5-phospho-1-deoxy-D-ribulos-1-ylimino)methylamino]-1-(5-phospho-beta-D-ribosyl)imidazole-4-carboxamide. The protein operates within amino-acid biosynthesis; L-histidine biosynthesis; L-histidine from 5-phospho-alpha-D-ribose 1-diphosphate: step 4/9. The sequence is that of 1-(5-phosphoribosyl)-5-[(5-phosphoribosylamino)methylideneamino] imidazole-4-carboxamide isomerase from Clostridium beijerinckii (strain ATCC 51743 / NCIMB 8052) (Clostridium acetobutylicum).